Consider the following 490-residue polypeptide: Phosphoglucosamine mutase (490 aa).

Ser-139 functions as the Phosphoserine intermediate in the catalytic mechanism. Mg(2+)-binding residues include Ser-139, Asp-279, Asp-281, and Asp-283. Ser-139 carries the post-translational modification Phosphoserine.

It belongs to the phosphohexose mutase family. Mg(2+) is required as a cofactor. Activated by phosphorylation.

It carries out the reaction alpha-D-glucosamine 1-phosphate = D-glucosamine 6-phosphate. Catalyzes the conversion of glucosamine-6-phosphate to glucosamine-1-phosphate. This is Phosphoglucosamine mutase from Nostoc punctiforme (strain ATCC 29133 / PCC 73102).